The chain runs to 242 residues: Uridylate kinase (242 aa).

Position 11-14 (11-14 (KLSG)) interacts with ATP. Gly-53 is a UMP binding site. The ATP site is built by Gly-54 and Arg-58. UMP contacts are provided by residues Asp-73 and 134–141 (SGNPFFTT). Residues Thr-161, Tyr-167, and Asp-170 each coordinate ATP.

This sequence belongs to the UMP kinase family. In terms of assembly, homohexamer.

The protein resides in the cytoplasm. It catalyses the reaction UMP + ATP = UDP + ADP. The protein operates within pyrimidine metabolism; CTP biosynthesis via de novo pathway; UDP from UMP (UMPK route): step 1/1. Its activity is regulated as follows. Inhibited by UTP. Its function is as follows. Catalyzes the reversible phosphorylation of UMP to UDP. The polypeptide is Uridylate kinase (Thermosynechococcus vestitus (strain NIES-2133 / IAM M-273 / BP-1)).